The primary structure comprises 140 residues: Nucleoside diphosphate kinase (140 aa).

The ATP site is built by lysine 11, phenylalanine 59, arginine 87, threonine 93, arginine 104, and asparagine 114. The Pros-phosphohistidine intermediate role is filled by histidine 117.

This sequence belongs to the NDK family. As to quaternary structure, homotetramer. The cofactor is Mg(2+).

It localises to the cytoplasm. The enzyme catalyses a 2'-deoxyribonucleoside 5'-diphosphate + ATP = a 2'-deoxyribonucleoside 5'-triphosphate + ADP. It carries out the reaction a ribonucleoside 5'-diphosphate + ATP = a ribonucleoside 5'-triphosphate + ADP. Major role in the synthesis of nucleoside triphosphates other than ATP. The ATP gamma phosphate is transferred to the NDP beta phosphate via a ping-pong mechanism, using a phosphorylated active-site intermediate. The chain is Nucleoside diphosphate kinase from Rhodovulum sulfidophilum (Rhodobacter sulfidophilus).